The chain runs to 334 residues: GTP 3',8-cyclase (334 aa).

Positions 11–236 constitute a Radical SAM core domain; sequence GFNRKIDYLR…ESTESSMGPA (226 aa). Arg20 contributes to the GTP binding site. The [4Fe-4S] cluster site is built by Cys27 and Cys31. Tyr33 is a binding site for S-adenosyl-L-methionine. Cys34 is a [4Fe-4S] cluster binding site. Arg69 contributes to the GTP binding site. Gly73 serves as a coordination point for S-adenosyl-L-methionine. Thr100 lines the GTP pocket. Ser124 contacts S-adenosyl-L-methionine. Residue Lys161 participates in GTP binding. Met195 lines the S-adenosyl-L-methionine pocket. The [4Fe-4S] cluster site is built by Cys260 and Cys263. 265–267 lines the GTP pocket; sequence RVR. Cys277 contributes to the [4Fe-4S] cluster binding site.

Belongs to the radical SAM superfamily. MoaA family. In terms of assembly, monomer and homodimer. [4Fe-4S] cluster is required as a cofactor.

The enzyme catalyses GTP + AH2 + S-adenosyl-L-methionine = (8S)-3',8-cyclo-7,8-dihydroguanosine 5'-triphosphate + 5'-deoxyadenosine + L-methionine + A + H(+). The protein operates within cofactor biosynthesis; molybdopterin biosynthesis. Functionally, catalyzes the cyclization of GTP to (8S)-3',8-cyclo-7,8-dihydroguanosine 5'-triphosphate. The sequence is that of GTP 3',8-cyclase from Pseudomonas putida (strain ATCC 700007 / DSM 6899 / JCM 31910 / BCRC 17059 / LMG 24140 / F1).